Here is a 142-residue protein sequence, read N- to C-terminus: Large ribosomal subunit protein uL23 (142 aa).

It belongs to the universal ribosomal protein uL23 family. As to quaternary structure, component of the large ribosomal subunit. Mature ribosomes consist of a small (40S) and a large (60S) subunit. The 40S subunit contains about 32 different proteins and 1 molecule of RNA (18S). The 60S subunit contains 45 different proteins and 3 molecules of RNA (25S, 5.8S and 5S).

The protein localises to the cytoplasm. Its function is as follows. Component of the ribosome, a large ribonucleoprotein complex responsible for the synthesis of proteins in the cell. The small ribosomal subunit (SSU) binds messenger RNAs (mRNAs) and translates the encoded message by selecting cognate aminoacyl-transfer RNA (tRNA) molecules. The large subunit (LSU) contains the ribosomal catalytic site termed the peptidyl transferase center (PTC), which catalyzes the formation of peptide bonds, thereby polymerizing the amino acids delivered by tRNAs into a polypeptide chain. The nascent polypeptides leave the ribosome through a tunnel in the LSU and interact with protein factors that function in enzymatic processing, targeting, and the membrane insertion of nascent chains at the exit of the ribosomal tunnel. RPL25 is a major component of the universal docking site for these factors at the polypeptide exit tunnel. The protein is Large ribosomal subunit protein uL23 of Candida albicans (strain SC5314 / ATCC MYA-2876) (Yeast).